A 962-amino-acid polypeptide reads, in one-letter code: UvrABC system protein A (962 aa).

38–45 contributes to the ATP binding site; sequence GISGSGKS. 2 consecutive ABC transporter domains span residues 319 to 597 and 617 to 944; these read WSKS…PDSL and PSGR…RFLR. 649 to 656 is a binding site for ATP; it reads GVSGSGKS. Residues 748–774 form a C4-type zinc finger; that stretch reads CEACGGDGIIKIEMHFLADVYVPCEVC.

This sequence belongs to the ABC transporter superfamily. UvrA family. Forms a heterotetramer with UvrB during the search for lesions.

Its subcellular location is the cytoplasm. The UvrABC repair system catalyzes the recognition and processing of DNA lesions. UvrA is an ATPase and a DNA-binding protein. A damage recognition complex composed of 2 UvrA and 2 UvrB subunits scans DNA for abnormalities. When the presence of a lesion has been verified by UvrB, the UvrA molecules dissociate. The polypeptide is UvrABC system protein A (Methanothermobacter thermautotrophicus (strain ATCC 29096 / DSM 1053 / JCM 10044 / NBRC 100330 / Delta H) (Methanobacterium thermoautotrophicum)).